The following is a 472-amino-acid chain: Probable dipeptidase A (472 aa).

Cysteine 10 is a catalytic residue.

This sequence belongs to the peptidase C69 family.

It carries out the reaction an L-aminoacyl-L-amino acid + H2O = 2 an L-alpha-amino acid. The polypeptide is Probable dipeptidase A (pepDA) (Streptococcus pyogenes serotype M1).